The sequence spans 253 residues: Isoprenyl transferase (253 aa).

Asp30 is a catalytic residue. Asp30 lines the Mg(2+) pocket. Substrate-binding positions include 31–34, Trp35, His51, and 79–81; these read GNRR and STE. The Proton acceptor role is filled by Asn82. Residues Phe83, Arg85, Arg202, and 208 to 210 each bind substrate; that span reads RVS. Glu221 serves as a coordination point for Mg(2+).

Belongs to the UPP synthase family. In terms of assembly, homodimer. It depends on Mg(2+) as a cofactor.

In terms of biological role, catalyzes the condensation of isopentenyl diphosphate (IPP) with allylic pyrophosphates generating different type of terpenoids. The sequence is that of Isoprenyl transferase from Chlamydia muridarum (strain MoPn / Nigg).